We begin with the raw amino-acid sequence, 278 residues long: Octanoyltransferase LipM (278 aa).

Residues 33–248 (KKMPPTIRFY…GFEKGLDVEL (216 aa)) form the BPL/LPL catalytic domain. Catalysis depends on C150, which acts as the Acyl-thioester intermediate.

This sequence belongs to the octanoyltransferase LipM family. In terms of assembly, monomer.

The enzyme catalyses octanoyl-[ACP] + L-lysyl-[protein] = N(6)-octanoyl-L-lysyl-[protein] + holo-[ACP] + H(+). It participates in protein modification; protein lipoylation via endogenous pathway; protein N(6)-(lipoyl)lysine from octanoyl-[acyl-carrier-protein]. Its function is as follows. Catalyzes the transfer of endogenously produced octanoic acid from octanoyl-acyl-carrier-protein onto the lipoyl domain of GcvH, an intermediate carrier during protein lipoylation. This Bacillus anthracis protein is Octanoyltransferase LipM.